The chain runs to 509 residues: Subtelomeric hrmA-associated cluster protein AFUB_078990 (509 aa).

Functionally, part of the subtelomeric hrmA-associated cluster (HAC) containing genes that alter the hyphal surface (such as reduced total chitin or increased beta-glucan exposure) and perturb inter-hyphal interactions within the developing biofilms, resulting in a loss of vertically aligned polarized growing filaments. Consequently, this hypoxia-typic morphotype (called H-MORPH) with altered biofilm architecture leads to increased hypoxia fitness, increased host inflammation, rapid disease progression, and mortality in a murine model of invasive aspergillosis. The protein is Subtelomeric hrmA-associated cluster protein AFUB_078990 of Aspergillus fumigatus (strain CBS 144.89 / FGSC A1163 / CEA10) (Neosartorya fumigata).